A 246-amino-acid chain; its full sequence is Probable transcriptional regulatory protein HSM_1763 (246 aa).

It belongs to the TACO1 family.

It is found in the cytoplasm. This is Probable transcriptional regulatory protein HSM_1763 from Histophilus somni (strain 2336) (Haemophilus somnus).